Reading from the N-terminus, the 320-residue chain is Phosphate acyltransferase (320 aa).

It belongs to the PlsX family. Homodimer. Probably interacts with PlsY.

The protein localises to the cytoplasm. The enzyme catalyses a fatty acyl-[ACP] + phosphate = an acyl phosphate + holo-[ACP]. The protein operates within lipid metabolism; phospholipid metabolism. Its function is as follows. Catalyzes the reversible formation of acyl-phosphate (acyl-PO(4)) from acyl-[acyl-carrier-protein] (acyl-ACP). This enzyme utilizes acyl-ACP as fatty acyl donor, but not acyl-CoA. This chain is Phosphate acyltransferase, found in Chlamydia pneumoniae (Chlamydophila pneumoniae).